Here is a 591-residue protein sequence, read N- to C-terminus: MASLKLGSKSEVFHLSGHTWLCKTGLKPDVMIQVVDESFHLHKFPLLSRSGYLETLFSKASETTCVAQLHDIPGGPETFLLVAKFCYGVRIEVTPENAVSLRCAAEYLQMSENYGDANLIYLTESFLNDHVFVNWEDSIKALEKSCEPKVLPLAEELHIVSRCIGSLAMKACAEDNTSFFNWPISLPEGTTTTTIYWNGIQTKATSENWWFNDVSSFLDLPMYKRFIKTVESRGVNAGIIAASVTHYAKRNLPLLGCSRKSGSPSEEGTNYGDDMYYSHEEQRSLLEEIVELLPGKKCVTSTKFLLRLLRTSMVLHASQVTQETLEKRIGMQLDEAALEDLLIPNMKYSGETLYDTDSVQRILDHFMLTFDSSIVEEKQMMGDSHPLKSITKVASLIDGYLAEVASDENLKLSKFQALGALIPEDVRPMDDGIYRAIDIYIKAHPWLTESEREQLCLLMNCQKLSLEACTHAAQNERLPLRVIVQVLFFEQMRLRTSIAGWLFGSEENNDTSGALEGNKNTNANMVMHGMRERVFELEKECMSMKQDLDKLVKTKEGRNFFSKIFGSRSKTKTSPCGKGGEDALVIPETKN.

A BTB domain is found at 28–95; sequence PDVMIQVVDE…CYGVRIEVTP (68 aa). Residues 208–493 enclose the NPH3 domain; it reads NWWFNDVSSF…VQVLFFEQMR (286 aa). A Phosphotyrosine modification is found at Tyr-434.

Belongs to the NPH3 family.

It participates in protein modification; protein ubiquitination. In terms of biological role, may act as a substrate-specific adapter of an E3 ubiquitin-protein ligase complex (CUL3-RBX1-BTB) which mediates the ubiquitination and subsequent proteasomal degradation of target proteins. This chain is Putative BTB/POZ domain-containing protein At5g13600, found in Arabidopsis thaliana (Mouse-ear cress).